We begin with the raw amino-acid sequence, 489 residues long: E3 ubiquitin-protein ligase RGLG1 (489 aa).

Over residues 1–10 (MGGGNSKEES) the composition is skewed to basic and acidic residues. The interval 1–125 (MGGGNSKEES…SQSQVADRKK (125 aa)) is disordered. Gly-2 is lipidated: N-myristoyl glycine. The segment covering 11-23 (SSPSSSSWASHQS) has biased composition (low complexity). A compositionally biased stretch (pro residues) spans 34-57 (YPPPPTYAPAPSPAPAPAPVPAPS). Residues 58 to 75 (PASSYGPQYSQEGYASQP) are compositionally biased toward low complexity. The segment covering 76–88 (NNPPPPTYAPAPS) has biased composition (pro residues). A VWFA domain is found at 156–376 (NLIVGIDFTK…KETEFALSAL (221 aa)). Residues 446-479 (CPICLSNPKNMAFGCGHQTCCECGPDLKVCPICR) form an RING-type zinc finger.

As to quaternary structure, interacts with the heterodimer UBC35/UEV1B. Interacts with ERF053. Interacts with PP2CA. In terms of processing, N-myristoylated. Ubiquitously expressed.

The protein resides in the cell membrane. It is found in the nucleus. It carries out the reaction S-ubiquitinyl-[E2 ubiquitin-conjugating enzyme]-L-cysteine + [acceptor protein]-L-lysine = [E2 ubiquitin-conjugating enzyme]-L-cysteine + N(6)-ubiquitinyl-[acceptor protein]-L-lysine.. In terms of biological role, E3 ubiquitin-protein ligase that mediates the formation of 'Lys-63'-linked ubiquitin chains. Regulates apical dominance by acting on the auxin transport proteins abundance. Together with RGLG5, mediates the ubiquitination and subsequent proteasomal degradation of the target protein PP2CA. Functions as a positive regulator of abscisic acid (ABA) signaling through ABA-dependent degradation of PP2CA, a major inhibitor of ABA signaling. Acts as a negative regulator of drought stress response. The polypeptide is E3 ubiquitin-protein ligase RGLG1 (Arabidopsis thaliana (Mouse-ear cress)).